Reading from the N-terminus, the 473-residue chain is Cysteine--tRNA ligase (473 aa).

Cys28 serves as a coordination point for Zn(2+). The short motif at 30–40 (MTVYDFCHIGH) is the 'HIGH' region element. Residues Cys212, His237, and Glu241 each contribute to the Zn(2+) site. Residues 277 to 281 (KMSKS) carry the 'KMSKS' region motif. Residue Lys280 coordinates ATP.

This sequence belongs to the class-I aminoacyl-tRNA synthetase family. As to quaternary structure, monomer. Zn(2+) serves as cofactor.

It is found in the cytoplasm. The catalysed reaction is tRNA(Cys) + L-cysteine + ATP = L-cysteinyl-tRNA(Cys) + AMP + diphosphate. The sequence is that of Cysteine--tRNA ligase from Polynucleobacter asymbioticus (strain DSM 18221 / CIP 109841 / QLW-P1DMWA-1) (Polynucleobacter necessarius subsp. asymbioticus).